The following is a 513-amino-acid chain: uncharacterized protein (513 aa).

Residues 3-61 (NLKIGQKLQLEIERMGINGEGIGVISGRLVFIPYALPGEEVLVEITENARNFSRAKLVK) enclose the TRAM domain. S-adenosyl-L-methionine contacts are provided by Gln309, Tyr338, Asp359, and Asp407. Catalysis depends on Cys434, which acts as the Nucleophile.

This sequence belongs to the class I-like SAM-binding methyltransferase superfamily. RNA M5U methyltransferase family.

This is an uncharacterized protein from Lactococcus lactis subsp. lactis (strain IL1403) (Streptococcus lactis).